The sequence spans 81 residues: uncharacterized protein (81 aa).

The N-terminal stretch at 1-22 is a signal peptide; sequence MNKKLSIIFLIFALIASVLCSA. The interval 29–81 is disordered; the sequence is HSSSTTTTTSSSGGTSGTDSSINTGSSYSGSGSGSGSTGGSGSGSGSGTAKWK. Residues 30 to 58 show a composition bias toward low complexity; that stretch reads SSSTTTTTSSSGGTSGTDSSINTGSSYSG. The span at 59-75 shows a compositional bias: gly residues; it reads SGSGSGSTGGSGSGSGS.

The protein localises to the secreted. This is an uncharacterized protein from Dictyostelium discoideum (Social amoeba).